Reading from the N-terminus, the 391-residue chain is MTDDFEDSFPDNETDAFEQAPLRLTVDLGALADNWRDMKKRSGRARTAAVVKADAYGLGIEDCGATLYHAGARDFFVATVAEGATLRSYAPEARIFVLSGIWQGQERQVFDNDLVPVLASEEQLSFWMATVAERGDHPCALHVDTGFNRLGLPLDDALFLADDVTRPASFDPVLVLSHLACADTPSSPMNRAQLESFRRVSAAFEGIESSLSASAGIFLGPDYHFDLTRPGIALYGGEAVNDVANPMRPVAKAEARIIQIREAGEGQTVSYGSSFLLKRASRLAIASVGYADGYQRSLSGSGIPLREMGHGGAYGVVNGHKVPVAGRVTMDLTIFDVTDVPANAIRAGDYIELFGPNVPVDETARAAGTIGYEMLTGLGLRYERQYLVADD.

The active-site Proton acceptor; specific for D-alanine is the Lys-52. The residue at position 52 (Lys-52) is an N6-(pyridoxal phosphate)lysine. Arg-149 is a binding site for substrate. The active-site Proton acceptor; specific for L-alanine is the Tyr-271. Substrate is bound at residue Met-330.

The protein belongs to the alanine racemase family. The cofactor is pyridoxal 5'-phosphate.

It catalyses the reaction L-alanine = D-alanine. The protein operates within amino-acid biosynthesis; D-alanine biosynthesis; D-alanine from L-alanine: step 1/1. It functions in the pathway cell wall biogenesis; peptidoglycan biosynthesis. Functionally, catalyzes the interconversion of L-alanine and D-alanine. Provides the D-alanine required for cell wall biosynthesis. The chain is Alanine racemase, biosynthetic (alr) from Agrobacterium fabrum (strain C58 / ATCC 33970) (Agrobacterium tumefaciens (strain C58)).